Reading from the N-terminus, the 120-residue chain is uncharacterized protein (120 aa).

In terms of domain architecture, VOC spans 4–120; that stretch reads QIGTVAVYVE…EDGNVFLLKE (117 aa).

This is an uncharacterized protein from Bacillus subtilis (strain 168).